The chain runs to 90 residues: Translation initiation factor IF-1 2 (90 aa).

Positions 1–72 (MAKEELLELD…TKGRINFRHK (72 aa)) constitute an S1-like domain.

It belongs to the IF-1 family. Component of the 30S ribosomal translation pre-initiation complex which assembles on the 30S ribosome in the order IF-2 and IF-3, IF-1 and N-formylmethionyl-tRNA(fMet); mRNA recruitment can occur at any time during PIC assembly.

Its subcellular location is the cytoplasm. Its function is as follows. One of the essential components for the initiation of protein synthesis. Stabilizes the binding of IF-2 and IF-3 on the 30S subunit to which N-formylmethionyl-tRNA(fMet) subsequently binds. Helps modulate mRNA selection, yielding the 30S pre-initiation complex (PIC). Upon addition of the 50S ribosomal subunit IF-1, IF-2 and IF-3 are released leaving the mature 70S translation initiation complex. The sequence is that of Translation initiation factor IF-1 2 from Paraburkholderia xenovorans (strain LB400).